A 368-amino-acid polypeptide reads, in one-letter code: WD repeat-containing protein RUP2 (368 aa).

WD repeat units follow at residues 38–77, 97–138, 141–184, 192–232, 236–276, 279–318, and 330–368; these read SASD…RNNA, CTPA…PVFE, EHGG…EESV, ICRS…DPAL, GHTK…RTYE, VNNR…PVWV, and SDKR…KRKP.

As to quaternary structure, interacts with UVR8.

The protein resides in the nucleus. The protein localises to the cytoplasm. It is found in the cytosol. Functions in association with RUP1 as repressor of UV-B-induced photomorphogenesis mediated by UVR8 and HY5. Plays a crucial negative feedback regulatory role downstream of UVR8-COP1 to inhibit UVR8 function, balance UV-B-specific responses and ensure normal plant growth. Is involved in the regulation of photoperiodic flowering and vegetative development. May act as negative regulator of photoperiodic flowering by suppressing flowering through the action of CONSTANS (CO) and FLOWERING LOCUS T (FT). This chain is WD repeat-containing protein RUP2 (RUP2), found in Arabidopsis thaliana (Mouse-ear cress).